We begin with the raw amino-acid sequence, 326 residues long: D-allose transport system permease protein AlsC (326 aa).

The Cytoplasmic portion of the chain corresponds to 1 to 18 (MGFTTRVKSEASEKKPFN). Residues 19–39 (FALFWDKYGTFFILAIIVAIF) form a helical membrane-spanning segment. Residues 40–70 (GSLSPEYFLTTNNITQIFVQSSVTVLIGMGE) lie on the Periplasmic side of the membrane. A helical transmembrane segment spans residues 71 to 91 (FFAILVAGIDLSVGAILALSG). Residues 92–101 (MVTAKLMLAG) are Cytoplasmic-facing. The helical transmembrane segment at 102 to 122 (VDPFLAAMIGGVLVGGALGAI) threads the bilayer. Over 123 to 124 (NG) the chain is Periplasmic. The chain crosses the membrane as a helical span at residues 125–145 (CLVNWTGLHPFIITLGTNAIF). The Cytoplasmic portion of the chain corresponds to 146–149 (RGIT). A helical transmembrane segment spans residues 150-170 (LVISDANSVYGFSFDFVNFFA). At 171–172 (AS) the chain is on the periplasmic side. A helical membrane pass occupies residues 173–193 (VIGIPVPVIFSLIVALILWFL). Residues 194–221 (TTRMRLGRNIYALGGNKNSAFYSGIDVK) are Cytoplasmic-facing. Residues 222-242 (FHILVVFIISGVCAGLAGVVS) form a helical membrane-spanning segment. At 243–252 (TARLGAAEPL) the chain is on the periplasmic side. Residues 253 to 273 (AGMGFETYAIASAIIGGTSFF) traverse the membrane as a helical segment. At 274–278 (GGKGR) the chain is on the cytoplasmic side. The next 2 helical transmembrane spans lie at 279–299 (IFSV…LNIL) and 300–320 (QVQT…AVAL). Topologically, residues 321–326 (DRLISK) are cytoplasmic.

This sequence belongs to the binding-protein-dependent transport system permease family. AraH/RbsC subfamily.

The protein resides in the cell inner membrane. In terms of biological role, part of the binding-protein-dependent transport system AlsBAC for D-allose; probably responsible for the translocation of the substrate across the membrane. This chain is D-allose transport system permease protein AlsC (alsC), found in Escherichia coli (strain K12).